The chain runs to 467 residues: Chromosomal replication initiator protein DnaA (467 aa).

The interval 1–90 is domain I, interacts with DnaA modulators; sequence MSLSLWQQCL…KPVTQTPQAA (90 aa). The segment at 91–130 is domain II; sequence VTSNVAAPAQVAQTQPQRAAPSTRSGWDNVPAPAEPTYRS. Over residues 98–111 the composition is skewed to low complexity; it reads PAQVAQTQPQRAAP. A disordered region spans residues 98–119; that stretch reads PAQVAQTQPQRAAPSTRSGWDN. Residues 131 to 347 are domain III, AAA+ region; it reads NVNVKHTFDN…GALNRVIANA (217 aa). ATP contacts are provided by Gly-175, Gly-177, Lys-178, and Thr-179. Residues 348 to 467 are domain IV, binds dsDNA; sequence NFTGRAITID…FSNLIRTLSS (120 aa).

Belongs to the DnaA family. Oligomerizes as a right-handed, spiral filament on DNA at oriC.

The protein localises to the cytoplasm. Plays an essential role in the initiation and regulation of chromosomal replication. ATP-DnaA binds to the origin of replication (oriC) to initiate formation of the DNA replication initiation complex once per cell cycle. Binds the DnaA box (a 9 base pair repeat at the origin) and separates the double-stranded (ds)DNA. Forms a right-handed helical filament on oriC DNA; dsDNA binds to the exterior of the filament while single-stranded (ss)DNA is stabiized in the filament's interior. The ATP-DnaA-oriC complex binds and stabilizes one strand of the AT-rich DNA unwinding element (DUE), permitting loading of DNA polymerase. After initiation quickly degrades to an ADP-DnaA complex that is not apt for DNA replication. Binds acidic phospholipids. In Shigella boydii serotype 4 (strain Sb227), this protein is Chromosomal replication initiator protein DnaA.